The chain runs to 176 residues: WASH complex subunit 3 (176 aa).

A coiled-coil region spans residues 47-74 (ETKFVEMERQLQKTEAALIILEAKLASI). Disordered regions lie at residues 84–123 (ATEA…PESV) and 152–176 (KMQS…GQRE). Residues 104 to 115 (TTEPPTTENPTE) show a composition bias toward low complexity.

Belongs to the CCDC53 family. As to quaternary structure, component of the WASH complex.

Its subcellular location is the early endosome. Its function is as follows. Acts at least in part as component of the WASH complex which may regulate wash nucleation-promoting factor (NPF) activity and is required for its membrane targeting during endosomal sorting. During embryogenesis, not involved in the wash-dependent developmental migration of hemocytes anteriorly from the tail. The sequence is that of WASH complex subunit 3 from Drosophila melanogaster (Fruit fly).